The sequence spans 956 residues: MALAQESVFSVLYHLKHDPVDYWFHNWVLHGPMLFRSIGSGIVNFCTFQWVGWLIHLPIVRPDALASLFHEYDLPSSIEAGATPIRGMLTISQTVPTTAGMDPFLLGIMNSPALVISISTTTILCLRWLSLDLRWAAILAFFGNFLSNWLVVVAVLFGLDDLVARWYFLTPFTYVGSVLFIWYLVYKWIKVGLNFDLTSKGPFGMNPEVWRGLKIGMTGFTLGLCEQTVLFHKLIQPLSPHQLDLLHGFTSGTVRDHIVMHGAYVIGLFVGGVFLGSVILSVLIPAVDTWSEKKLLTQARFSLLLIMMTGASLPYYGFDYLLTRFADFAPDGGWRESTIFKPSLNKHLVSKNIHRKFTIADSTRRDTARPWREARNLFPERRWLLKVGTKSKAKLSTLPILDFVTHWRGGEDFVYSIVNPADFYRDLTKDPLQGKGKTLDKAVWKFVGNFFYQWKDEDLSRRKFQEQVKGIVDYARYRMVVINDIHVKGLVTTEQGDIRGVVDQHADMKLLQLPEAFVNQRLVKPPFLKHDWVLTIPKMSEQAKEERLLLKRQKMPPELSIEQQKTFFDSNAQKLFGTPNHYGLPEALDSSLESEEENLDPEEDIDPEIVDPLSSEESKTIDTLKVDLRTLSKNAKWVPKSVIQKQAAEKAEEERKAEEEKLLAVRNAKKKGLTVPKTEPKKGLTKQRQANPLGTPSLFYDKLHKRAEWNNEDFPHWGYMYHQLWKHRAYSHFMFRRLLEVDVDSMLARQPSRNFVTDADYQRLQYHQVALSSYHRSLRDYETSLWNVLLEPRANFFLAPNPLWRWDADWKVGFRAKSLENYVYDQRFKGTHRVVQRLFLLDTQFNPWDKTGPQFRYDQLLPLEEQDKGDRSNLWHEEIPREVRENVGAYDPFESQRVPPMFDPVPFYIGWDPILRKSVLTTSRLPKGTARVKLVLPGTQTPKWLKFIVSLESSDS.

6 helical membrane-spanning segments follow: residues 40 to 60 (SGIVNFCTFQWVGWLIHLPIV), 104 to 124 (FLLGIMNSPALVISISTTTIL), 137 to 157 (AILAFFGNFLSNWLVVVAVLF), 166 to 186 (WYFLTPFTYVGSVLFIWYLVY), 264 to 284 (YVIGLFVGGVFLGSVILSVLI), and 301 to 321 (FSLLLIMMTGASLPYYGFDYL). Positions 580-609 (NHYGLPEALDSSLESEEENLDPEEDIDPEI) are disordered. The segment covering 592–609 (LESEEENLDPEEDIDPEI) has biased composition (acidic residues). Positions 640-672 (KSVIQKQAAEKAEEERKAEEEKLLAVRNAKKKG) form a coiled coil.

The protein belongs to the ycf78 family.

It is found in the plastid. It localises to the chloroplast membrane. This is an uncharacterized protein from Nephroselmis olivacea (Green alga).